We begin with the raw amino-acid sequence, 475 residues long: UDP-N-acetylmuramoylalanine--D-glutamate ligase (475 aa).

130 to 136 serves as a coordination point for ATP; the sequence is GTNGKTT.

This sequence belongs to the MurCDEF family.

It localises to the cytoplasm. It carries out the reaction UDP-N-acetyl-alpha-D-muramoyl-L-alanine + D-glutamate + ATP = UDP-N-acetyl-alpha-D-muramoyl-L-alanyl-D-glutamate + ADP + phosphate + H(+). Its pathway is cell wall biogenesis; peptidoglycan biosynthesis. In terms of biological role, cell wall formation. Catalyzes the addition of glutamate to the nucleotide precursor UDP-N-acetylmuramoyl-L-alanine (UMA). This is UDP-N-acetylmuramoylalanine--D-glutamate ligase from Corynebacterium efficiens (strain DSM 44549 / YS-314 / AJ 12310 / JCM 11189 / NBRC 100395).